We begin with the raw amino-acid sequence, 277 residues long: Large ribosomal subunit protein uL2 (277 aa).

The tract at residues 215-263 (LGRKPHQRGSAMNPVDHPHGGGEGRTGAGRVPVSPWGQPAKGLKTRKKR) is disordered.

It belongs to the universal ribosomal protein uL2 family. In terms of assembly, part of the 50S ribosomal subunit. Forms a bridge to the 30S subunit in the 70S ribosome.

Functionally, one of the primary rRNA binding proteins. Required for association of the 30S and 50S subunits to form the 70S ribosome, for tRNA binding and peptide bond formation. It has been suggested to have peptidyltransferase activity; this is somewhat controversial. Makes several contacts with the 16S rRNA in the 70S ribosome. The protein is Large ribosomal subunit protein uL2 of Deinococcus geothermalis (strain DSM 11300 / CIP 105573 / AG-3a).